A 108-amino-acid polypeptide reads, in one-letter code: Insulin-like peptide 17 (108 aa).

An N-terminal signal peptide occupies residues M1 to A19.

This sequence belongs to the insulin family. Expressed in head neurons and the uterus.

The protein localises to the secreted. Involved in the regulation of the larval diapause. In Caenorhabditis elegans, this protein is Insulin-like peptide 17.